A 304-amino-acid polypeptide reads, in one-letter code: C-type lectin domain-containing protein 141 (304 aa).

Positions 1 to 19 (MRSSSTLLIAFGLFLASMS) are cleaved as a signal peptide. The interval 29–100 (GSGGHRPPSS…TTPEPTTTKV (72 aa)) is disordered. Positions 51–99 (TKPPKSTSTPSTSTSTPTTTTTTTTTTTTTPTTTTTTTTTTTPEPTTTK) are enriched in low complexity.

The polypeptide is C-type lectin domain-containing protein 141 (clec-141) (Caenorhabditis elegans).